Reading from the N-terminus, the 967-residue chain is Muscular LMNA-interacting protein (967 aa).

S129 is modified (phosphoserine). Disordered stretches follow at residues 132–154, 302–336, 432–462, 506–628, 644–685, 786–838, and 929–967; these read EDEA…IATR, GLAS…ASLT, QKVK…HQAS, GSTL…SASH, QTLQ…TPSL, SMHS…SQLT, and FSVR…DSKE. The required for interaction with ISL1 stretch occupies residues 144-811; it reads PPGGPGNIAT…GSETIKTPTT (668 aa). The span at 437-455 shows a compositional bias: low complexity; it reads TPPTSKKSLSSGSLTTGST. The segment covering 508-523 has biased composition (polar residues); it reads TLRSNTTSPQPQTDTF. Over residues 528–541 the composition is skewed to low complexity; sequence VPSVTPVLSPLSSS. A compositionally biased stretch (basic and acidic residues) spans 543 to 556; that stretch reads GRKDGDSRTPEKNR. Composition is skewed to polar residues over residues 558–567 and 658–685; these read ICIQPSTLAS and GSAT…TPSL. S792 is subject to Phosphoserine. A compositionally biased stretch (polar residues) spans 800-811; the sequence is MLGSETIKTPTT. Over residues 826–835 the composition is skewed to low complexity; the sequence is SSSSSTASES. Polar residues predominate over residues 938–947; sequence SPTLLSQDTY. The span at 958 to 967 shows a compositional bias: basic and acidic residues; that stretch reads PEHDTLDSKE.

As to quaternary structure, directly interacts with LMNA. Interacts with ISL1 (via N-terminal domain); the interaction represses ISL1 transactivator activity. Interactions of ISL1 with MLIP1 and GCN5/KAT2A may be mutually exclusive. Post-translationally, may be ubiquitinated by UBE3C ubiquitin ligase; ubiquitination is followed by protein degradation. Predominantly expressed in the heart and skeletal muscle, but detected at lower levels in the lung and brain (at protein level). Also detected in smooth muscle, thymus and kidney. In brain, expressed by a subpopulation of cells within the hippocampus and cortex. In heart, expressed by cardiomyocytes. Expression is reduced in hypertrophic hearts at the transcript level. However, expression in hypertrophic hearts induced by transverse aortic constriction do not differ from control at the protein level.

It is found in the nucleus. The protein resides in the nucleus envelope. Its subcellular location is the PML body. The protein localises to the cytoplasm. It localises to the cytosol. It is found in the cell membrane. The protein resides in the sarcolemma. Functionally, required for myoblast differentiation into myotubes, possibly acting as a transcriptional regulator of the myogenic program. Required for cardiac adaptation to stress through integrated regulation of the AKT/mTOR pathways and FOXO1. Regulates cardiac homeostasis and plays a role in the protection against cardiac hypertrophy. Binds chromatin. May act as a transcriptional cofactor for ISL1, repressing its transcriptional activity. May also repress MYOCD transcriptional activity. The polypeptide is Muscular LMNA-interacting protein (Mus musculus (Mouse)).